The sequence spans 37 residues: Cytochrome b6-f complex subunit 5 (37 aa).

The helical transmembrane segment at 5-25 threads the bilayer; the sequence is LLSGIVLGLVPVTIAGLFVTA.

The protein belongs to the PetG family. The 4 large subunits of the cytochrome b6-f complex are cytochrome b6, subunit IV (17 kDa polypeptide, PetD), cytochrome f and the Rieske protein, while the 4 small subunits are PetG, PetL, PetM and PetN. The complex functions as a dimer.

It localises to the plastid. It is found in the chloroplast thylakoid membrane. Component of the cytochrome b6-f complex, which mediates electron transfer between photosystem II (PSII) and photosystem I (PSI), cyclic electron flow around PSI, and state transitions. PetG is required for either the stability or assembly of the cytochrome b6-f complex. The protein is Cytochrome b6-f complex subunit 5 of Chlamydomonas moewusii (Chlamydomonas eugametos).